We begin with the raw amino-acid sequence, 118 residues long: Basic phospholipase A2 CM-II (118 aa).

Disulfide bonds link cysteine 11/cysteine 70, cysteine 26/cysteine 117, cysteine 28/cysteine 44, cysteine 43/cysteine 98, cysteine 50/cysteine 91, cysteine 59/cysteine 84, and cysteine 77/cysteine 89. Ca(2+)-binding residues include tyrosine 27, glycine 29, and glycine 31. Residue histidine 47 is part of the active site. Aspartate 48 is a Ca(2+) binding site. Aspartate 92 is an active-site residue.

It belongs to the phospholipase A2 family. Group I subfamily. D49 sub-subfamily. It depends on Ca(2+) as a cofactor. Expressed by the venom gland.

It is found in the secreted. The catalysed reaction is a 1,2-diacyl-sn-glycero-3-phosphocholine + H2O = a 1-acyl-sn-glycero-3-phosphocholine + a fatty acid + H(+). Snake venom phospholipase A2 (PLA2) that causes myonecrosis when injected intramuscularly, causes neuromuscular blockade with a gradual contracture and a decreased sensitivity to ACh and KCl (in the chick biventer cervicis nerve-muscle preparation), abolishes twitches evoked by indirect stimulation earlier than those by direct stimulation (in the mouse phrenic nerve-diaphragm preparation), shows indirect hemolytic activity, and shows weak anticoagulant activity. PLA2 catalyzes the calcium-dependent hydrolysis of the 2-acyl groups in 3-sn-phosphoglycerides. This is Basic phospholipase A2 CM-II from Naja mossambica (Mozambique spitting cobra).